Consider the following 170-residue polypeptide: Thioredoxin-like protein YneN (170 aa).

A helical transmembrane segment spans residues 5–23 (WLAGILLIMLVGYTGWNLY). Residues 33 to 170 (IQEGQQAPDF…KEMEQKLDLD (138 aa)) form the Thioredoxin domain. C71 and C74 form a disulfide bridge.

The protein belongs to the thioredoxin family.

The protein resides in the cell membrane. This Bacillus subtilis (strain 168) protein is Thioredoxin-like protein YneN (yneN).